A 142-amino-acid chain; its full sequence is UPF0275 protein PM0505 (142 aa).

Belongs to the UPF0275 family.

This Pasteurella multocida (strain Pm70) protein is UPF0275 protein PM0505.